The following is a 141-amino-acid chain: Large-conductance mechanosensitive channel (141 aa).

2 helical membrane passes run 16–36 (VVDL…VSSM) and 83–103 (GNFI…FLMV).

Belongs to the MscL family. In terms of assembly, homopentamer.

Its subcellular location is the cell inner membrane. In terms of biological role, channel that opens in response to stretch forces in the membrane lipid bilayer. May participate in the regulation of osmotic pressure changes within the cell. In Cytophaga hutchinsonii (strain ATCC 33406 / DSM 1761 / CIP 103989 / NBRC 15051 / NCIMB 9469 / D465), this protein is Large-conductance mechanosensitive channel.